A 310-amino-acid polypeptide reads, in one-letter code: Olfactory receptor 2A12 (310 aa).

The Extracellular portion of the chain corresponds to 1-24 (MESNQTWITEVILLGFQVDPALEL). N-linked (GlcNAc...) asparagine glycosylation is present at Asn4. The chain crosses the membrane as a helical span at residues 25-48 (FLFGFFLLFYSLTLMGNGIILGLI). The Cytoplasmic portion of the chain corresponds to 49–56 (YLDSRLHT). The chain crosses the membrane as a helical span at residues 57–78 (PMYVFLSHLAIVDMSYASSTVP). Residues 79-99 (KMLANLVMHKKVISFAPCILQ) lie on the Extracellular side of the membrane. A disulfide bridge connects residues Cys96 and Cys188. The chain crosses the membrane as a helical span at residues 100–119 (TFLYLAFAITECLILVMMCY). The Cytoplasmic portion of the chain corresponds to 120 to 138 (DRYVAICHPLQYTLIMNWR). A helical membrane pass occupies residues 139 to 157 (VCTVLASTCWIFSFLLALV). The Extracellular segment spans residues 158–194 (HITLILRLPFCGPQKINHFFCQIMSVFKLACADTRLN). The chain crosses the membrane as a helical span at residues 195-218 (QVVLFAGSAFILVGPLCLVLVSYL). The Cytoplasmic portion of the chain corresponds to 219–235 (HILVAILRIQSGEGRRK). A helical membrane pass occupies residues 236 to 258 (AFSTCSSHLCVVGLFFGSAIVMY). Residues 259–271 (MAPKSSHSQERRK) lie on the Extracellular side of the membrane. The chain crosses the membrane as a helical span at residues 272-291 (ILSLFYSLFNPILNPLIYSL). The Cytoplasmic portion of the chain corresponds to 292–310 (RNAEVKGALKRVLWKQRSM).

It belongs to the G-protein coupled receptor 1 family.

The protein resides in the cell membrane. Its function is as follows. Odorant receptor. The sequence is that of Olfactory receptor 2A12 (OR2A12) from Homo sapiens (Human).